Consider the following 51-residue polypeptide: Large ribosomal subunit protein eL39 (51 aa).

Basic residues predominate over residues 1 to 15 (MAAKKSFKIKQKLAK). The disordered stretch occupies residues 1-21 (MAAKKSFKIKQKLAKAKNQNR).

Belongs to the eukaryotic ribosomal protein eL39 family. Interacts with YIH1.

This Eremothecium gossypii (strain ATCC 10895 / CBS 109.51 / FGSC 9923 / NRRL Y-1056) (Yeast) protein is Large ribosomal subunit protein eL39 (RPL39).